Consider the following 866-residue polypeptide: MTNDKDRKAPLSLSPKGKLELKKSAETGQVRQSFSHGRSKVVQVEVRKSKKRPATSGDPAAVQNAIRGAAVFDTGLTSEEMQGRRRAVEEAVVRAAEEAERKRLEEIERRRREEEEARLKVEEEARRKAEEEAARAARAAAGDAAETPAEDVAPAAPQVAAAPQAPAPAPTRSGPRPGPDASARPAAEAPRSPTEAPRPGPRRVVEDEDDDAPKKVASRGAVPPKPAPAKRVEPKRRGKLTVTAALEGDERSERGRSVAALRRAKQKEKRKAEMMSPAERVVREVIIPDVINVQELANRMAERGANVIKTLMKMGVMATINQTIDADTAELVVAEFGHASRRVSDSDVELGLGDALPDGTEVLTSRPPVVTVMGHVDHGKTSLLDAMRKTDVAGGEAGGITQHIGAYQVVTKSGQKITFIDTPGHAAFTAMRARGARVTDIVVLVVAANDGIMPQTIEAIRHARAAEVPVVVAINKMDLPDANPEKVRTDLLQHELVVEQLGGDVLNVEVSAKRRLNLDKLEEAILLQSEILDLKANADRACQGVVIEAKVEKGRGSVATILVQKGTLKVGDIFVAGAEWGRVRALVDDHGNRVIAATPAMPVEVLGFQGTPAAGDDFIVVEDENRAREISEYRQRKDRDAQQVRTARGTMEQMFERIQAGEARELPVVIKADVQGSVEALVGTLEKLGNDDVKIRVLHAAVGAINESDVTLAKASDGLIIGFNVRANPQAREMARRDGIDIRYHSIIYAVADEVKALLSGMLEPTFKESFIGYAAIREVFNITKVGKVAGCMVTEGIVKRGAKVRLLRDNVVIHEGSLSQLKRFKDDVREVREGYECGMSFETYNDIQVGDVIECFEMEEVAAVL.

Disordered stretches follow at residues 1-63 (MTND…AAVQ) and 92-257 (VVRA…RGRS). Polar residues predominate over residues 26-36 (ETGQVRQSFSH). A compositionally biased stretch (basic and acidic residues) spans 92 to 135 (VVRAAEEAERKRLEEIERRRREEEEARLKVEEEARRKAEEEAAR). 2 stretches are compositionally biased toward low complexity: residues 152-164 (VAPAAPQVAAAPQ) and 179-197 (PDASARPAAEAPRSPTEAP). One can recognise a tr-type G domain in the interval 365 to 533 (SRPPVVTVMG…AILLQSEILD (169 aa)). The tract at residues 374–381 (GHVDHGKT) is G1. Residue 374–381 (GHVDHGKT) participates in GTP binding. A G2 region spans residues 399 to 403 (GITQH). Residues 421 to 424 (DTPG) are G3. GTP contacts are provided by residues 421–425 (DTPGH) and 475–478 (NKMD). Residues 475 to 478 (NKMD) are G4. The tract at residues 511–513 (SAK) is G5.

The protein belongs to the TRAFAC class translation factor GTPase superfamily. Classic translation factor GTPase family. IF-2 subfamily.

The protein resides in the cytoplasm. Its function is as follows. One of the essential components for the initiation of protein synthesis. Protects formylmethionyl-tRNA from spontaneous hydrolysis and promotes its binding to the 30S ribosomal subunits. Also involved in the hydrolysis of GTP during the formation of the 70S ribosomal complex. The chain is Translation initiation factor IF-2 from Rhodospirillum rubrum (strain ATCC 11170 / ATH 1.1.1 / DSM 467 / LMG 4362 / NCIMB 8255 / S1).